We begin with the raw amino-acid sequence, 648 residues long: Transcription termination factor FttA (648 aa).

Positions 1–179 (MIKRETQVDQ…QVGRNIYRKP (179 aa)) are not required for dimerization, required for cleavage at some sites. Residues 9–76 (DQILKDIRGI…ISIRPDPDVL (68 aa)) are KHa. The KHb stretch occupies residues 77 to 144 (LPPEEAEKLI…WAPKVVRTPP (68 aa)). The metallo-beta-lactamase N-terminus stretch occupies residues 185–395 (WIRITGLGGF…LVMESTYGGA (211 aa)). Zn(2+)-binding residues include His253, His255, Asp257, His258, His341, and Asp364. The segment at 396–589 (NDIQMPREEA…MEVHTIDGFS (194 aa)) is beta-Casp. Residues 590 to 648 (GHADRRELMNYVAKVRPRPERVITVHGEPQKCLDLATSIHRKFGLSTRAPNNLDTIRLR) form a metallo-beta-lactamase C-terminus region. His615 serves as a coordination point for Zn(2+).

The protein belongs to the metallo-beta-lactamase superfamily. RNA-metabolizing metallo-beta-lactamase-like family. FttA subfamily. Homodimer. Interacts with RNA polymerase (RNAP), interacts with the Spt4-Spt5 complex. Zn(2+) serves as cofactor.

Its activity is regulated as follows. EndoRNase activity is inhibited by 1,10-phenanthroline. Functionally, terminates transcription on the whole genome. Termination is linked to FttA-mediated RNA cleavage and does not require NTP hydrolysis. Cleaves endonucleolytically at the RNA exit channel of RNA polymerase (RNAP); the 5'-3' exonuclease activity of this protein degrades the nascent RNA released from RNAP. In terms of biological role, a single-stranded endoribonuclease (endoRNase) with a preference for cleavage at CA dinucleotides. Has 5'-3' exoribonuclease (exoRNase) activity on 5'-monophosphorylated RNA; this activity does not occur on 5'-tri-phosphorylated or 5'-OH substrates. Also has weak activity 5'-3' exodeoxyribonuclease activity on ssDNA. This chain is Transcription termination factor FttA, found in Pyrococcus abyssi (strain GE5 / Orsay).